We begin with the raw amino-acid sequence, 87 residues long: Mu-theraphotoxin-Hs1a (87 aa).

The signal sequence occupies residues methionine 1 to alanine 24. Positions serine 25–arginine 52 are excised as a propeptide. 3 disulfides stabilise this stretch: cysteine 54–cysteine 67, cysteine 61–cysteine 72, and cysteine 66–cysteine 79.

The protein belongs to the neurotoxin 10 (Hwtx-1) family. 51 (Hntx-8) subfamily. Hntx-8 sub-subfamily. As to expression, expressed by the venom gland.

The protein localises to the secreted. Probable sodium channel pore blocker that dose-dependently inhibits voltage-gated sodium channels (VGSC) on DUM neurons in a way similar to tetrodotoxin. Has no effect on the kinetics of activation and inactivation. Seems not to interact with VGSC in an inactivated state. In vivo, reversibly paralyzes cockroaches, and can enhance the muscular contraction elicited by stimulating its nerve. This chain is Mu-theraphotoxin-Hs1a, found in Cyriopagopus schmidti (Chinese bird spider).